The chain runs to 95 residues: Co-chaperonin GroES (95 aa).

The protein belongs to the GroES chaperonin family. In terms of assembly, heptamer of 7 subunits arranged in a ring. Interacts with the chaperonin GroEL.

It localises to the cytoplasm. Functionally, together with the chaperonin GroEL, plays an essential role in assisting protein folding. The GroEL-GroES system forms a nano-cage that allows encapsulation of the non-native substrate proteins and provides a physical environment optimized to promote and accelerate protein folding. GroES binds to the apical surface of the GroEL ring, thereby capping the opening of the GroEL channel. This is Co-chaperonin GroES from Dichelobacter nodosus (strain VCS1703A).